We begin with the raw amino-acid sequence, 569 residues long: Cationic amino acid transporter 5 (569 aa).

Residues 1–67 (MEGEERGYWR…KQSEHEMKRC (67 aa)) are Cytoplasmic-facing. Residues 68-88 (LTWWDLVWFGFGSVIGAGIFV) traverse the membrane as a helical segment. Residues 89 to 97 (LTGQEAHEQ) lie on the Extracellular side of the membrane. A helical membrane pass occupies residues 98–118 (AGPAIVLSYVVSGLSAMLSVF). At 119–143 (CYTEFAVEIPVAGGSFAYLRIELGD) the chain is on the cytoplasmic side. The helical transmembrane segment at 144–164 (FAAFITAGNILLESIVGTAAV) threads the bilayer. Topologically, residues 165 to 192 (ARAWTSYFATLLNRSPNALRIKTDLSSG) are extracellular. The chain crosses the membrane as a helical span at residues 193–213 (FNLLDPIAVVVIAASATIASI). The Cytoplasmic portion of the chain corresponds to 214 to 222 (STRKTSLLN). Residues 223-243 (WIASAINTLVIFFVIIAGFIH) form a helical membrane-spanning segment. Residues 244–251 (ADTSNLTP) lie on the Extracellular side of the membrane. The helical transmembrane segment at 252–272 (FLPFGPEGVFRAAAVVYFAYG) threads the bilayer. Topologically, residues 273 to 290 (GFDSIATMAEETKNPSRD) are cytoplasmic. A helical membrane pass occupies residues 291–311 (IPIGLLGSMSIITVIYCLMAL). The Extracellular portion of the chain corresponds to 312–341 (SLSMMQKYTDIDPNAAYSVAFQSVGMKWGK). A helical transmembrane segment spans residues 342–362 (YLVALGALKGMTTVLLVGALG). The Cytoplasmic portion of the chain corresponds to 363–389 (QARYVTHIARTHMIPPIFALVHPKTGT). Residues 390–410 (PINANLLVAIPSALIAFFSGL) form a helical membrane-spanning segment. Position 411 (D411) is a topological domain, extracellular. The helical transmembrane segment at 412–432 (VLASLLSISTLFIFTMMPIAL) threads the bilayer. The Cytoplasmic segment spans residues 433-450 (LVRRYYVRQDTPRVHLIK). Residues 451-471 (LITCLLFVVVSSMGTSAYWGM) form a helical membrane-spanning segment. Residues 472–477 (QRKGSW) lie on the Extracellular side of the membrane. Residues 478 to 498 (IGYTVTVPFWFLGTLGIVFFV) traverse the membrane as a helical segment. Residues 499–505 (PQQRTPK) lie on the Cytoplasmic side of the membrane. The helical transmembrane segment at 506–526 (VWGVPLVPWLPCLSIATNIFL) threads the bilayer. The Extracellular portion of the chain corresponds to 527-537 (MGSLGAMAFVR). The chain crosses the membrane as a helical span at residues 538–558 (FGVCTLAMLLYYFLLGLHATF). At 559–569 (DMAHQQIVPRT) the chain is on the cytoplasmic side.

The protein belongs to the amino acid-polyamine-organocation (APC) superfamily. Cationic amino acid transporter (CAT) (TC 2.A.3.3) family. As to expression, expressed in roots, stems, flowers, seeds, and leaves. Mostly present in leaf rims and cotyledons of developing seedlings.

The protein localises to the cell membrane. Functionally, high-affinity permease involved in the transport of the cationic amino acids (e.g. arginine, and, to a lower extent, citrulline and glutamate). Transport mostly basic amino acids, and, to a lower extent neutral and acidic amino acids. In Arabidopsis thaliana (Mouse-ear cress), this protein is Cationic amino acid transporter 5 (CAT5).